The chain runs to 357 residues: Guanine nucleotide-binding protein alpha-2 subunit (357 aa).

Gly-2 carries the N-myristoyl glycine lipid modification. The S-palmitoyl cysteine moiety is linked to residue Cys-4. The G-alpha domain maps to 30-356; it reads NEVKLLLLGA…TQCVMKAGLY (327 aa). The interval 33–46 is G1 motif; that stretch reads KLLLLGAGESGKST. GTP contacts are provided by Glu-41, Ser-42, Gly-43, Lys-44, Ser-45, and Thr-46. Ser-45 provides a ligand contact to Mg(2+). Ser-113 bears the Phosphoserine mark. Residues Asp-154, Leu-179, Thr-185, Gly-207, Asn-272, Lys-273, Asp-275, and Ala-328 each contribute to the GTP site. The segment at 177–185 is G2 motif; it reads DILHTRVMT. Position 185 (Thr-185) interacts with Mg(2+). The tract at residues 200–209 is G3 motif; the sequence is FRLVDVGGQR. Residues 268–275 are G4 motif; sequence ILFLNKSD. The G5 motif stretch occupies residues 326-331; the sequence is TCATDT.

This sequence belongs to the G-alpha family. In terms of assembly, g proteins are composed of 3 units; alpha, beta and gamma. The alpha chain contains the guanine nucleotide binding site. Interacts with the RAP guanine nucleotide exchange factor glfB. Mg(2+) serves as cofactor. Ser-113 is transiently phosphorylated following stimulation with extracellular cAMP.

In terms of biological role, guanine nucleotide-binding proteins (G proteins) are involved as modulators or transducers in various transmembrane signaling systems. G alpha-2 is required for the early aggregation process and most of the known cAMP receptor-mediated responses. Interacts with downstream effector gflB, a Rap guanine nucleotide exchange factor, to regulate the balance between Ras and Rap signaling at the leading edge of chemotaxing cells. The protein is Guanine nucleotide-binding protein alpha-2 subunit (gpaB) of Dictyostelium discoideum (Social amoeba).